The sequence spans 103 residues: Matrix Gla protein (103 aa).

The signal sequence occupies residues 1–19 (MKSLVLLAILAALAVVTLC). E21 bears the 4-carboxyglutamate mark. S22, S25, and S28 each carry phosphoserine. Residues 51–97 (RAKVQERIRERSKPVHELNREACDDYRLCERYAMVYGYNAAYNRYFR) form the Gla domain. E56, E60, E67, and E71 each carry 4-carboxyglutamate. C73 and C79 are joined by a disulfide. Residues 97 to 103 (RERRGAK) constitute a propeptide, removed in mature form; probably by carboxypeptidase N.

This sequence belongs to the osteocalcin/matrix Gla protein family. Post-translationally, requires vitamin K-dependent gamma-carboxylation for its function.

It localises to the secreted. Associates with the organic matrix of bone and cartilage. Thought to act as an inhibitor of bone formation. This is Matrix Gla protein (MGP) from Pongo abelii (Sumatran orangutan).